The primary structure comprises 242 residues: Biosynthetic peptidoglycan transglycosylase (242 aa).

Residues 19–39 traverse the membrane as a helical segment; it reads ILAALAVFWGGGIALFSVVPV.

It belongs to the glycosyltransferase 51 family.

Its subcellular location is the cell inner membrane. The catalysed reaction is [GlcNAc-(1-&gt;4)-Mur2Ac(oyl-L-Ala-gamma-D-Glu-L-Lys-D-Ala-D-Ala)](n)-di-trans,octa-cis-undecaprenyl diphosphate + beta-D-GlcNAc-(1-&gt;4)-Mur2Ac(oyl-L-Ala-gamma-D-Glu-L-Lys-D-Ala-D-Ala)-di-trans,octa-cis-undecaprenyl diphosphate = [GlcNAc-(1-&gt;4)-Mur2Ac(oyl-L-Ala-gamma-D-Glu-L-Lys-D-Ala-D-Ala)](n+1)-di-trans,octa-cis-undecaprenyl diphosphate + di-trans,octa-cis-undecaprenyl diphosphate + H(+). Its pathway is cell wall biogenesis; peptidoglycan biosynthesis. In terms of biological role, peptidoglycan polymerase that catalyzes glycan chain elongation from lipid-linked precursors. The chain is Biosynthetic peptidoglycan transglycosylase from Salmonella schwarzengrund (strain CVM19633).